A 163-amino-acid polypeptide reads, in one-letter code: Small ribosomal subunit protein bS6 (163 aa).

The segment at 97–163 (EEGQTAMLTN…GRNEGEGDRA (67 aa)) is disordered. The span at 122 to 163 (RGPRRDFGDRGPRRDFGDRGPRRDGDGPRAEGGRNEGEGDRA) shows a compositional bias: basic and acidic residues.

Belongs to the bacterial ribosomal protein bS6 family.

Its function is as follows. Binds together with bS18 to 16S ribosomal RNA. In Rhodospirillum centenum (strain ATCC 51521 / SW), this protein is Small ribosomal subunit protein bS6.